The following is a 357-amino-acid chain: DNA primase small subunit PriS (357 aa).

Active-site residues include Asp105, Asp107, and Asp259.

The protein belongs to the eukaryotic-type primase small subunit family. As to quaternary structure, heterodimer of a small subunit (PriS) and a large subunit (PriL). Requires Mg(2+) as cofactor. The cofactor is Mn(2+).

Its function is as follows. Catalytic subunit of DNA primase, an RNA polymerase that catalyzes the synthesis of short RNA molecules used as primers for DNA polymerase during DNA replication. The small subunit contains the primase catalytic core and has DNA synthesis activity on its own. Binding to the large subunit stabilizes and modulates the activity, increasing the rate of DNA synthesis while decreasing the length of the DNA fragments, and conferring RNA synthesis capability. The DNA polymerase activity may enable DNA primase to also catalyze primer extension after primer synthesis. May also play a role in DNA repair. The polypeptide is DNA primase small subunit PriS (Methanococcus maripaludis (strain C6 / ATCC BAA-1332)).